Consider the following 140-residue polypeptide: Cytochrome c oxidase subunit 6, mitochondrial (140 aa).

Belongs to the cytochrome c oxidase subunit 5A family. In terms of assembly, component of the cytochrome c oxidase (complex IV, CIV), a multisubunit enzyme composed of a catalytic core of 3 subunits and several supernumerary subunits. The complex exists as a monomer or a dimer and forms supercomplexes (SCs) in the inner mitochondrial membrane with ubiquinol-cytochrome c oxidoreductase (cytochrome b-c1 complex, complex III, CIII).

It is found in the mitochondrion inner membrane. Its pathway is energy metabolism; oxidative phosphorylation. Component of the cytochrome c oxidase, the last enzyme in the mitochondrial electron transport chain which drives oxidative phosphorylation. The respiratory chain contains 3 multisubunit complexes succinate dehydrogenase (complex II, CII), ubiquinol-cytochrome c oxidoreductase (cytochrome b-c1 complex, complex III, CIII) and cytochrome c oxidase (complex IV, CIV), that cooperate to transfer electrons derived from NADH and succinate to molecular oxygen, creating an electrochemical gradient over the inner membrane that drives transmembrane transport and the ATP synthase. Cytochrome c oxidase is the component of the respiratory chain that catalyzes the reduction of oxygen to water. Electrons originating from reduced cytochrome c in the intermembrane space (IMS) are transferred via the dinuclear copper A center (CU(A)) of subunit 2 and heme A of subunit 1 to the active site in subunit 1, a binuclear center (BNC) formed by heme A3 and copper B (CU(B)). The BNC reduces molecular oxygen to 2 water molecules using 4 electrons from cytochrome c in the IMS and 4 protons from the mitochondrial matrix. In Schizosaccharomyces pombe (strain 972 / ATCC 24843) (Fission yeast), this protein is Cytochrome c oxidase subunit 6, mitochondrial (cox6).